We begin with the raw amino-acid sequence, 217 residues long: Elongation factor Ts (217 aa).

Positions 82–85 (TDFV) are involved in Mg(2+) ion dislocation from EF-Tu.

The protein belongs to the EF-Ts family.

The protein localises to the cytoplasm. Its function is as follows. Associates with the EF-Tu.GDP complex and induces the exchange of GDP to GTP. It remains bound to the aminoacyl-tRNA.EF-Tu.GTP complex up to the GTP hydrolysis stage on the ribosome. This is Elongation factor Ts from Synechococcus sp. (strain RCC307).